The chain runs to 323 residues: uncharacterized protein (323 aa).

The next 3 membrane-spanning stretches (helical) occupy residues F8–E28, L32–L52, and I92–F112.

Its subcellular location is the mitochondrion membrane. This is an uncharacterized protein from Neurospora crassa (strain ATCC 24698 / 74-OR23-1A / CBS 708.71 / DSM 1257 / FGSC 987).